The sequence spans 100 residues: Large ribosomal subunit protein uL23 (100 aa).

Belongs to the universal ribosomal protein uL23 family. Part of the 50S ribosomal subunit. Contacts protein L29, and trigger factor when it is bound to the ribosome.

In terms of biological role, one of the early assembly proteins it binds 23S rRNA. One of the proteins that surrounds the polypeptide exit tunnel on the outside of the ribosome. Forms the main docking site for trigger factor binding to the ribosome. The sequence is that of Large ribosomal subunit protein uL23 from Lacticaseibacillus casei (strain BL23) (Lactobacillus casei).